The sequence spans 150 residues: Large ribosomal subunit protein bL9 (150 aa).

It belongs to the bacterial ribosomal protein bL9 family.

Functionally, binds to the 23S rRNA. The protein is Large ribosomal subunit protein bL9 of Idiomarina loihiensis (strain ATCC BAA-735 / DSM 15497 / L2-TR).